A 392-amino-acid chain; its full sequence is Outer membrane protein assembly factor BamB (392 aa).

The first 19 residues, 1–19 (MQLRKLLLPGLLSVTLLSG), serve as a signal peptide directing secretion. Cys20 carries the N-palmitoyl cysteine lipid modification. Cys20 is lipidated: S-diacylglycerol cysteine.

Belongs to the BamB family. In terms of assembly, part of the Bam complex, which is composed of the outer membrane protein BamA, and four lipoproteins BamB, BamC, BamD and BamE. Monomer. Interacts directly with BamA. The Bam complex has the shape of a hat, with the BamA beta-barrel crown in the outer membrane and the periplasmic brim formed by the BamA POTRA domains and the 4 lipoproteins.

Its subcellular location is the cell outer membrane. Part of the outer membrane protein assembly complex (Bam), which is involved in assembly and insertion of beta-barrel proteins into the outer membrane. Nonessential member of the complex, which may orient the flexible periplasmic domain of BamA for interaction with other Bam components, chaperones and nascent outer membrane proteins. Efficient substrate folding and insertion into the outer membrane requires all 5 subunits. A lateral gate may open between the first and last strands of the BamA beta-barrel that allows substrate to insert into the outer membrane; comparison of the structures of complete and nearly complete Bam complexes show there is considerable movement of all 5 proteins. The chain is Outer membrane protein assembly factor BamB from Escherichia coli (strain K12).